A 157-amino-acid polypeptide reads, in one-letter code: 3-dehydroquinate dehydratase (157 aa).

Tyr24 serves as the catalytic Proton acceptor. 3 residues coordinate substrate: Asn75, His81, and Asp88. The active-site Proton donor is His101. Substrate-binding positions include 102 to 103 and Arg112; that span reads LS.

Belongs to the type-II 3-dehydroquinase family. Homododecamer.

The catalysed reaction is 3-dehydroquinate = 3-dehydroshikimate + H2O. It participates in metabolic intermediate biosynthesis; chorismate biosynthesis; chorismate from D-erythrose 4-phosphate and phosphoenolpyruvate: step 3/7. Its function is as follows. Catalyzes a trans-dehydration via an enolate intermediate. The protein is 3-dehydroquinate dehydratase of Brucella abortus (strain S19).